The chain runs to 188 residues: Elongation factor P (188 aa).

The protein belongs to the elongation factor P family.

It is found in the cytoplasm. It participates in protein biosynthesis; polypeptide chain elongation. In terms of biological role, involved in peptide bond synthesis. Stimulates efficient translation and peptide-bond synthesis on native or reconstituted 70S ribosomes in vitro. Probably functions indirectly by altering the affinity of the ribosome for aminoacyl-tRNA, thus increasing their reactivity as acceptors for peptidyl transferase. The protein is Elongation factor P of Leptospira interrogans serogroup Icterohaemorrhagiae serovar copenhageni (strain Fiocruz L1-130).